We begin with the raw amino-acid sequence, 175 residues long: Sec-independent protein translocase protein TatB (175 aa).

A helical membrane pass occupies residues 1 to 21 (MLDLGLTKMALIGVVALVVLG). Disordered regions lie at residues 104–132 (GGAL…RKNW) and 155–175 (SGAA…TRFF).

The protein belongs to the TatB family. In terms of assembly, the Tat system comprises two distinct complexes: a TatABC complex, containing multiple copies of TatA, TatB and TatC subunits, and a separate TatA complex, containing only TatA subunits. Substrates initially bind to the TatABC complex, which probably triggers association of the separate TatA complex to form the active translocon.

The protein resides in the cell inner membrane. Its function is as follows. Part of the twin-arginine translocation (Tat) system that transports large folded proteins containing a characteristic twin-arginine motif in their signal peptide across membranes. Together with TatC, TatB is part of a receptor directly interacting with Tat signal peptides. TatB may form an oligomeric binding site that transiently accommodates folded Tat precursor proteins before their translocation. The chain is Sec-independent protein translocase protein TatB from Paraburkholderia xenovorans (strain LB400).